Consider the following 628-residue polypeptide: ATP-dependent RNA helicase mrh4, mitochondrial (628 aa).

Residues 1-40 constitute a mitochondrion transit peptide; sequence MSLAVRPPVCLLCRSGAPTLLPSSVSQVARSMATARLRRK. The interval 51 to 109 is disordered; it reads AKSSINQKRSGKAKFGPWSGMNQTEAHIRGEPRSRSQAALRRSGEKAADTPRKSDSPLY. Basic and acidic residues predominate over residues 92-105; sequence RSGEKAADTPRKSD. Positions 137 to 170 match the Q motif motif; it reads TSFDHFPLLPVVRHSIFSQALPGLVDVTPTPIQR. The 213-residue stretch at 190-402 folds into the Helicase ATP-binding domain; the sequence is EDGDPQYDQY…RKRYPDIKRL (213 aa). An ATP-binding site is contributed by 203-210; that stretch reads AETGSGKT. Residues 228–253 show a composition bias toward basic and acidic residues; the sequence is DKENERKEEERKAKEKEERLKNRAFD. The tract at residues 228–260 is disordered; it reads DKENERKEEERKAKEKEERLKNRAFDLEPEEPP. A DEAD box motif is present at residues 349-352; it reads DEAD. A Helicase C-terminal domain is found at 456–628; sequence YVGPNIKKIL…EGMFRGQALI (173 aa).

This sequence belongs to the DEAD box helicase family. MRH4 subfamily.

It localises to the mitochondrion. The catalysed reaction is ATP + H2O = ADP + phosphate + H(+). In terms of biological role, ATP-binding RNA helicase involved in mitochondrial RNA metabolism. Required for maintenance of mitochondrial DNA. In Aspergillus oryzae (strain ATCC 42149 / RIB 40) (Yellow koji mold), this protein is ATP-dependent RNA helicase mrh4, mitochondrial (mrh4).